The following is a 5043-amino-acid chain: Polyketide synthase PksJ (5043 aa).

The interval 141-481 (AVITDRGMHQ…ELPEIETSYT (341 aa)) is adenylation 1. The Carrier 1 domain maps to 590–667 (RVREEIQKHL…RLASYLSEHE (78 aa)). Serine 627 carries the post-translational modification O-(pantetheine 4'-phosphoryl)serine. Positions 690–989 (QATFQPLSEV…NMLPIRSELN (300 aa)) are condensation. The adenylation 2 stretch occupies residues 1181 to 1578 (TYRELDEKST…EHPGILECVV (398 aa)). A Carrier 2 domain is found at 1654–1729 (TSPKNIQDTV…NISQYITEQR (76 aa)). An O-(pantetheine 4'-phosphoryl)serine modification is found at serine 1689. The region spanning 1760 to 2186 (DDSVAIIGIS…GTNTHAIFEQ (427 aa)) is the Ketosynthase family 3 (KS3) 1 domain. Catalysis depends on for beta-ketoacyl synthase 1 activity residues cysteine 1932, histidine 2068, and histidine 2108. Residues 2374–2499 (HPLLHQNTSD…GSAELASAAE (126 aa)) form an N-terminal hotdog fold region. One can recognise a PKS/mFAS DH domain in the interval 2374–2661 (HPLLHQNTSD…TRVLEGEVHT (288 aa)). Histidine 2403 functions as the Proton acceptor; for dehydratase activity in the catalytic mechanism. The segment at 2513–2661 (GKGKMSPDQF…TRVLEGEVHT (149 aa)) is C-terminal hotdog fold. Aspartate 2575 acts as the Proton donor; for dehydratase activity in catalysis. Carrier domains lie at 3114–3188 (RKLE…VAAY) and 3212–3286 (SSLE…TVEH). An O-(pantetheine 4'-phosphoryl)serine mark is found at serine 3148 and serine 3246. Positions 3291–3314 (VQEREKPEGQEELQTKSSEAPKIT) are disordered. The 441-residue stretch at 3339-3779 (FEPVAIVGIS…GVNAHIVIEE (441 aa)) folds into the Ketosynthase family 3 (KS3) 2 domain. Active-site for beta-ketoacyl synthase 2 activity residues include cysteine 3511, histidine 3646, and histidine 3695. Residues 3839–3872 (REEMDERLACVAGTMQELEEKLQAFVDGKEETDE) are a coiled coil. A Carrier 5 domain is found at 4459 to 4536 (GLLSETQSWL…RFADWLIGSY (78 aa)). The residue at position 4496 (serine 4496) is an O-(pantetheine 4'-phosphoryl)serine. A Ketosynthase family 3 (KS3) 3 domain is found at 4588–4992 (AEGIAVVGLS…GTNAHVIVEA (405 aa)). The active-site For beta-ketoacyl synthase 3 activity is the cysteine 4743.

This sequence belongs to the ATP-dependent AMP-binding enzyme family. Pantetheine 4'-phosphate serves as cofactor.

The protein resides in the cytoplasm. It functions in the pathway antibiotic biosynthesis; bacillaene biosynthesis. Involved in some intermediate steps for the synthesis of the antibiotic polyketide bacillaene which is involved in secondary metabolism. This Bacillus subtilis (strain 168) protein is Polyketide synthase PksJ (pksJ).